The following is a 441-amino-acid chain: Hydroxycinnamoyl-CoA:5-hydroxyanthranilate N-hydroxycinnamoyltransferase HHT1 (441 aa).

Residues H158 and D388 each act as proton acceptor in the active site.

The protein belongs to the plant acyltransferase family.

It catalyses the reaction 5-hydroxyanthranilate + (E)-4-coumaroyl-CoA = avenanthramide A + CoA. The enzyme catalyses 5-hydroxyanthranilate + (E)-caffeoyl-CoA = avenanthramide C + CoA. Involved in the biosynthesis of avenanthramide phytoalexins, which are phenolic alkaloids found mainly in oats. Catalyzes the N-acylation of 5-hydroxyanthranilate with 4-coumaroyl-CoA or caffeoyl-CoA as acyl donors, forming avenanthramide A and avenanthramide C, respectively. Does not accept feruloyl-CoA as a substrate. The protein is Hydroxycinnamoyl-CoA:5-hydroxyanthranilate N-hydroxycinnamoyltransferase HHT1 of Avena sativa (Oat).